We begin with the raw amino-acid sequence, 203 residues long: ATP-dependent Clp protease proteolytic subunit (203 aa).

The active-site Nucleophile is serine 107. The active site involves histidine 132.

Belongs to the peptidase S14 family. As to quaternary structure, fourteen ClpP subunits assemble into 2 heptameric rings which stack back to back to give a disk-like structure with a central cavity, resembling the structure of eukaryotic proteasomes.

It localises to the cytoplasm. The catalysed reaction is Hydrolysis of proteins to small peptides in the presence of ATP and magnesium. alpha-casein is the usual test substrate. In the absence of ATP, only oligopeptides shorter than five residues are hydrolyzed (such as succinyl-Leu-Tyr-|-NHMec, and Leu-Tyr-Leu-|-Tyr-Trp, in which cleavage of the -Tyr-|-Leu- and -Tyr-|-Trp bonds also occurs).. Functionally, cleaves peptides in various proteins in a process that requires ATP hydrolysis. Has a chymotrypsin-like activity. Plays a major role in the degradation of misfolded proteins. The protein is ATP-dependent Clp protease proteolytic subunit of Pelagibacter ubique (strain HTCC1062).